The chain runs to 68 residues: Large ribosomal subunit protein bL35 (68 aa).

The protein belongs to the bacterial ribosomal protein bL35 family.

This chain is Large ribosomal subunit protein bL35, found in Pelagibacter ubique (strain HTCC1062).